Consider the following 325-residue polypeptide: Eukaryotic translation initiation factor 3 subunit I (325 aa).

WD repeat units follow at residues 8 to 47 (GHER…RLGT), 50 to 91 (GHTG…ALLK), 144 to 183 (CNDS…VLVN), and 186 to 225 (EHSR…HQKT). Lys-264 is subject to N6-acetyllysine. Residue Lys-282 forms a Glycyl lysine isopeptide (Lys-Gly) (interchain with G-Cter in ubiquitin) linkage. Residues 283–324 (GHFGPINSVAFHPDGKSYSSGGEDGYVRIHYFDPQYFEFEFE) form a WD 5 repeat. Tyr-308 carries the phosphotyrosine modification.

Belongs to the eIF-3 subunit I family. Component of the eukaryotic translation initiation factor 3 (eIF-3) complex, which is composed of 13 subunits: EIF3A, EIF3B, EIF3C, EIF3D, EIF3E, EIF3F, EIF3G, EIF3H, EIF3I, EIF3J, EIF3K, EIF3L and EIF3M. The eIF-3 complex appears to include 3 stable modules: module A is composed of EIF3A, EIF3B, EIF3G and EIF3I; module B is composed of EIF3F, EIF3H, and EIF3M; and module C is composed of EIF3C, EIF3D, EIF3E, EIF3K and EIF3L. EIF3C of module C binds EIF3B of module A and EIF3H of module B, thereby linking the three modules. EIF3J is a labile subunit that binds to the eIF-3 complex via EIF3B. The eIF-3 complex interacts with RPS6KB1 under conditions of nutrient depletion. Mitogenic stimulation leads to binding and activation of a complex composed of MTOR and RPTOR, leading to phosphorylation and release of RPS6KB1 and binding of EIF4B to eIF-3. Post-translationally, phosphorylated by TGF-beta type II receptor.

It localises to the cytoplasm. Functionally, component of the eukaryotic translation initiation factor 3 (eIF-3) complex, which is required for several steps in the initiation of protein synthesis. The eIF-3 complex associates with the 40S ribosome and facilitates the recruitment of eIF-1, eIF-1A, eIF-2:GTP:methionyl-tRNAi and eIF-5 to form the 43S pre-initiation complex (43S PIC). The eIF-3 complex stimulates mRNA recruitment to the 43S PIC and scanning of the mRNA for AUG recognition. The eIF-3 complex is also required for disassembly and recycling of post-termination ribosomal complexes and subsequently prevents premature joining of the 40S and 60S ribosomal subunits prior to initiation. The eIF-3 complex specifically targets and initiates translation of a subset of mRNAs involved in cell proliferation, including cell cycling, differentiation and apoptosis, and uses different modes of RNA stem-loop binding to exert either translational activation or repression. This chain is Eukaryotic translation initiation factor 3 subunit I (Eif3i), found in Rattus norvegicus (Rat).